The sequence spans 428 residues: GTPase Obg (428 aa).

The 158-residue stretch at 1–158 (MFVDQVKIYV…RDVILELKVL (158 aa)) folds into the Obg domain. In terms of domain architecture, OBG-type G spans 159-329 (ADVGLVGFPS…LLFEVANLIE (171 aa)). GTP is bound by residues 165–172 (GFPSVGKS), 190–194 (FTTIV), 212–215 (DLPG), 282–285 (NKMD), and 310–312 (SAV). Mg(2+) contacts are provided by Ser-172 and Thr-192. Positions 350–428 (KFETEGVKFD…ILEYEFEFID (79 aa)) constitute an OCT domain.

Belongs to the TRAFAC class OBG-HflX-like GTPase superfamily. OBG GTPase family. In terms of assembly, monomer. Mg(2+) serves as cofactor.

The protein localises to the cytoplasm. In terms of biological role, an essential GTPase which binds GTP, GDP and possibly (p)ppGpp with moderate affinity, with high nucleotide exchange rates and a fairly low GTP hydrolysis rate. Plays a role in control of the cell cycle, stress response, ribosome biogenesis and in those bacteria that undergo differentiation, in morphogenesis control. The protein is GTPase Obg of Bacillus cereus (strain AH820).